We begin with the raw amino-acid sequence, 1473 residues long: DNA topoisomerase 2 (1473 aa).

The disordered stretch occupies residues 1-20; that stretch reads MATKLPLQNSNAANVAKAPA. Residues 9-20 are compositionally biased toward low complexity; the sequence is NSNAANVAKAPA. ATP is bound by residues asparagine 91, asparagine 120, 148 to 150, and 161 to 168; these read SSN and GRNGYGAK. Residues 345-347 are interaction with DNA; the sequence is NKK. Residue 378–380 coordinates ATP; the sequence is QTK. One can recognise a Toprim domain in the interval 455–569; it reads CTLILTEGDS…SLLQVPSFLV (115 aa). Mg(2+)-binding residues include glutamate 461, aspartate 538, and aspartate 540. The region spanning 704-1163 is the Topo IIA-type catalytic domain; sequence IPSMVDGLKP…TPKSLWLSDL (460 aa). Tyrosine 794 functions as the O-(5'-phospho-DNA)-tyrosine intermediate in the catalytic mechanism. The interaction with DNA stretch occupies residues 980–989; that stretch reads KLTTTIATSN. 3 disordered regions span residues 1195–1230, 1242–1297, and 1313–1473; these read SGAA…SYSA, KPKA…EVEE, and GSAP…EDDE. Composition is skewed to basic residues over residues 1200-1216 and 1278-1288; these read KVKR…KTTK and PKGRQGAKKKA. Over residues 1351 to 1360 the composition is skewed to low complexity; the sequence is KPAATKAAKP. Polar residues-rich tracts occupy residues 1394–1404 and 1417–1427; these read SPFNKKSSSVM and ENVAGNSSSEK. Positions 1453–1473 are enriched in acidic residues; the sequence is SESESANDSEFDDIEDDEDDE.

Belongs to the type II topoisomerase family. In terms of assembly, homodimer. Requires Mg(2+) as cofactor. It depends on Mn(2+) as a cofactor. Ca(2+) serves as cofactor.

It catalyses the reaction ATP-dependent breakage, passage and rejoining of double-stranded DNA.. Its function is as follows. Control of topological states of DNA by transient breakage and subsequent rejoining of DNA strands. Topoisomerase II makes double-strand breaks. This chain is DNA topoisomerase 2 (TOP2), found in Arabidopsis thaliana (Mouse-ear cress).